Here is a 445-residue protein sequence, read N- to C-terminus: Transcriptional enhancer factor TEF-4 (445 aa).

Disordered stretches follow at residues 1–47 and 191–217; these read MGDP…VWSP and PPASDLPGYEPPPALSPLPPPAPSPPA. Over residues 25–37 the composition is skewed to gly residues; the sequence is EGTGGSEGVGGDG. Residues 38–114 constitute a DNA-binding region (TEA); the sequence is SPDAEGVWSP…QVLARRKSRE (77 aa). Positions 172–445 are transcriptional activation; the sequence is WNVPDVKPFS…QYHIYRLVRD (274 aa). The span at 199 to 216 shows a compositional bias: pro residues; the sequence is YEPPPALSPLPPPAPSPP.

As to quaternary structure, interacts with YAP1 and WWTR1/TAZ. As to expression, highest expression in brain. High levels also found in lung, testis and ovarian follicle cells. Lower levels in heart and spleen.

It localises to the nucleus. In terms of biological role, transcription factor which plays a key role in the Hippo signaling pathway, a pathway involved in organ size control and tumor suppression by restricting proliferation and promoting apoptosis. The core of this pathway is composed of a kinase cascade wherein MST1/MST2, in complex with its regulatory protein SAV1, phosphorylates and activates LATS1/2 in complex with its regulatory protein MOB1, which in turn phosphorylates and inactivates YAP1 oncoprotein and WWTR1/TAZ. Acts by mediating gene expression of YAP1 and WWTR1/TAZ, thereby regulating cell proliferation, migration and epithelial mesenchymal transition (EMT) induction. Binds to the SPH and GT-IIC 'enhansons' (5'-GTGGAATGT-3'). May be involved in the gene regulation of neural development. Binds to the M-CAT motif. The polypeptide is Transcriptional enhancer factor TEF-4 (Tead2) (Mus musculus (Mouse)).